The following is a 103-amino-acid chain: NADH-quinone oxidoreductase subunit K (103 aa).

The next 3 membrane-spanning stretches (helical) occupy residues 6–26 (LAHYLVLGAVLFAISIVGIFL), 32–52 (IVLLMAIELMLLAVNLNFVAF), and 63–83 (VFVFFILTVAAAESAIGLAIL).

It belongs to the complex I subunit 4L family. NDH-1 is composed of 14 different subunits. Subunits NuoA, H, J, K, L, M, N constitute the membrane sector of the complex.

The protein localises to the cell inner membrane. It catalyses the reaction a quinone + NADH + 5 H(+)(in) = a quinol + NAD(+) + 4 H(+)(out). Functionally, NDH-1 shuttles electrons from NADH, via FMN and iron-sulfur (Fe-S) centers, to quinones in the respiratory chain. The immediate electron acceptor for the enzyme in this species is believed to be ubiquinone. Couples the redox reaction to proton translocation (for every two electrons transferred, four hydrogen ions are translocated across the cytoplasmic membrane), and thus conserves the redox energy in a proton gradient. The sequence is that of NADH-quinone oxidoreductase subunit K from Ralstonia pickettii (strain 12D).